The following is a 523-amino-acid chain: 2-isopropylmalate synthase (523 aa).

Residues 5 to 267 enclose the Pyruvate carboxyltransferase domain; the sequence is VIIFDTTLRD…HTNINHHEIW (263 aa). Positions 14, 202, 204, and 238 each coordinate Mn(2+). The interval 392–523 is regulatory domain; it reads RLDYFSVQSG…QNKENNKETV (132 aa).

The protein belongs to the alpha-IPM synthase/homocitrate synthase family. LeuA type 1 subfamily. In terms of assembly, homodimer. It depends on Mn(2+) as a cofactor.

The protein resides in the cytoplasm. The catalysed reaction is 3-methyl-2-oxobutanoate + acetyl-CoA + H2O = (2S)-2-isopropylmalate + CoA + H(+). It functions in the pathway amino-acid biosynthesis; L-leucine biosynthesis; L-leucine from 3-methyl-2-oxobutanoate: step 1/4. Catalyzes the condensation of the acetyl group of acetyl-CoA with 3-methyl-2-oxobutanoate (2-ketoisovalerate) to form 3-carboxy-3-hydroxy-4-methylpentanoate (2-isopropylmalate). This chain is 2-isopropylmalate synthase, found in Klebsiella pneumoniae (strain 342).